We begin with the raw amino-acid sequence, 284 residues long: uncharacterized protein (284 aa).

Composition is skewed to low complexity over residues 110–123 (NGPRGRQMNGPNNG) and 130–149 (NGPMNGPNNNQFNGPMNGPN). Residues 110–176 (NGPRGRQMNG…PNEFDSDDDD (67 aa)) form a disordered region.

The protein resides in the virion. This is an uncharacterized protein from Acanthamoeba polyphaga mimivirus (APMV).